Here is a 430-residue protein sequence, read N- to C-terminus: Tyrosine--tRNA ligase (430 aa).

Tyr32 contributes to the L-tyrosine binding site. The 'HIGH' region motif lies at 37–46 (PTADSLHIGH). The L-tyrosine site is built by Tyr172 and Gln176. The short motif at 232 to 236 (KFGKT) is the 'KMSKS' region element. Lys235 lines the ATP pocket. An S4 RNA-binding domain is found at 362 to 429 (VKAVDLFVDN…GKKNYYLIIA (68 aa)).

The protein belongs to the class-I aminoacyl-tRNA synthetase family. TyrS type 1 subfamily. Homodimer.

Its subcellular location is the cytoplasm. The enzyme catalyses tRNA(Tyr) + L-tyrosine + ATP = L-tyrosyl-tRNA(Tyr) + AMP + diphosphate + H(+). Catalyzes the attachment of tyrosine to tRNA(Tyr) in a two-step reaction: tyrosine is first activated by ATP to form Tyr-AMP and then transferred to the acceptor end of tRNA(Tyr). The sequence is that of Tyrosine--tRNA ligase from Bacteroides fragilis (strain ATCC 25285 / DSM 2151 / CCUG 4856 / JCM 11019 / LMG 10263 / NCTC 9343 / Onslow / VPI 2553 / EN-2).